The primary structure comprises 201 residues: Large ribosomal subunit protein uL18 (201 aa).

It belongs to the universal ribosomal protein uL18 family. Part of the 50S ribosomal subunit. Contacts the 5S and 23S rRNAs.

In terms of biological role, this is one of the proteins that bind and probably mediate the attachment of the 5S RNA into the large ribosomal subunit, where it forms part of the central protuberance. The protein is Large ribosomal subunit protein uL18 of Thermococcus kodakarensis (strain ATCC BAA-918 / JCM 12380 / KOD1) (Pyrococcus kodakaraensis (strain KOD1)).